A 455-amino-acid polypeptide reads, in one-letter code: 3-phosphoshikimate 1-carboxyvinyltransferase (455 aa).

Over residues 1 to 19 (MSHGASSRPATARKSSGLS) the composition is skewed to polar residues. The interval 1-25 (MSHGASSRPATARKSSGLSGTVRIP) is disordered. A phosphoenolpyruvate-binding site is contributed by Lys28. 3-phosphoshikimate is bound by residues Ser29 and Arg33. Arg128 is a phosphoenolpyruvate binding site. 5 residues coordinate 3-phosphoshikimate: Ser173, Ala174, Gln175, Asp326, and Lys353. Residue Gln175 participates in phosphoenolpyruvate binding. Asp326 acts as the Proton acceptor in catalysis. Phosphoenolpyruvate is bound by residues Arg357 and Arg405.

It belongs to the EPSP synthase family. As to quaternary structure, monomer.

The protein localises to the cytoplasm. It catalyses the reaction 3-phosphoshikimate + phosphoenolpyruvate = 5-O-(1-carboxyvinyl)-3-phosphoshikimate + phosphate. The protein operates within metabolic intermediate biosynthesis; chorismate biosynthesis; chorismate from D-erythrose 4-phosphate and phosphoenolpyruvate: step 6/7. Its activity is regulated as follows. Is resistant to inhibition by glyphosate (glyphosate-tolerant) like other members of class II EPSPS, in contrast to class I EPSPS, which is glyphosate-sensitive. Is much less sensitive to inhibition by the (R)-difluoromethyl and (R)-phosphonate analogs of the tetrahedral reaction intermediate than the representative class I EPSPS from E.coli. Is highly activated in the presence of cations, such as NH4(+), Rb(+), and K(+). Its function is as follows. Catalyzes the transfer of the enolpyruvyl moiety of phosphoenolpyruvate (PEP) to the 5-hydroxyl of shikimate-3-phosphate (S3P) to produce enolpyruvyl shikimate-3-phosphate and inorganic phosphate. The protein is 3-phosphoshikimate 1-carboxyvinyltransferase of Agrobacterium sp. (strain CP4).